A 199-amino-acid polypeptide reads, in one-letter code: N-(5'-phosphoribosyl)anthranilate isomerase (199 aa).

The protein belongs to the TrpF family.

It catalyses the reaction N-(5-phospho-beta-D-ribosyl)anthranilate = 1-(2-carboxyphenylamino)-1-deoxy-D-ribulose 5-phosphate. Its pathway is amino-acid biosynthesis; L-tryptophan biosynthesis; L-tryptophan from chorismate: step 3/5. This is N-(5'-phosphoribosyl)anthranilate isomerase from Streptococcus pneumoniae (strain Taiwan19F-14).